A 229-amino-acid chain; its full sequence is uncharacterized protein (229 aa).

The next 7 helical transmembrane spans lie at 1–21 (MFGT…GGIF), 32–52 (ILMQ…ITQH), 58–78 (YPIL…IINL), 100–120 (TAVL…EAAL), 139–159 (IVLA…LFSW), 178–198 (LINE…LSIL), and 206–226 (LNLL…HAFG).

It localises to the cell membrane. This is an uncharacterized protein from Bacillus subtilis (strain 168).